A 449-amino-acid chain; its full sequence is Glycerol-3-phosphate acyltransferase 3 (449 aa).

3 helical membrane-spanning segments follow: residues 9–29 (FVLL…PAMF), 146–166 (ISVR…CVLL), and 170–190 (ITLA…VGFL). The HXXXXD motif motif lies at 238–243 (HTSPID). The helical transmembrane segment at 358–378 (MVSYILRMMTSWAIVCNVWYL) threads the bilayer.

It belongs to the 1-acyl-sn-glycerol-3-phosphate acyltransferase family.

It is found in the endoplasmic reticulum membrane. The catalysed reaction is sn-glycerol 3-phosphate + an acyl-CoA = a 1-acyl-sn-glycero-3-phosphate + CoA. It carries out the reaction a 1-acyl-sn-glycero-3-phosphate + an acyl-CoA = a 1,2-diacyl-sn-glycero-3-phosphate + CoA. The enzyme catalyses dodecanoyl-CoA + sn-glycerol 3-phosphate = 1-dodecanoyl-sn-glycerol 3-phosphate + CoA. It catalyses the reaction sn-glycerol 3-phosphate + hexadecanoyl-CoA = 1-hexadecanoyl-sn-glycero-3-phosphate + CoA. The catalysed reaction is sn-glycerol 3-phosphate + (9Z)-octadecenoyl-CoA = 1-(9Z-octadecenoyl)-sn-glycero-3-phosphate + CoA. It carries out the reaction (9Z,12Z)-octadecadienoyl-CoA + sn-glycerol 3-phosphate = 1-(9Z,12Z)-octadecadienoyl-sn-glycero-3-phosphate + CoA. The enzyme catalyses 1-tetradecanoyl-sn-glycerol 3-phosphate + (9Z)-octadecenoyl-CoA = 1-tetradecanoyl-2-(9Z)-octadecenoyl-sn-glycero-3-phosphate + CoA. It catalyses the reaction 1-hexadecanoyl-sn-glycero-3-phosphate + (9Z)-octadecenoyl-CoA = 1-hexadecanoyl-2-(9Z-octadecenoyl)-sn-glycero-3-phosphate + CoA. The catalysed reaction is 1-(9Z-octadecenoyl)-sn-glycero-3-phosphate + (9Z)-octadecenoyl-CoA = 1,2-di-(9Z-octadecenoyl)-sn-glycero-3-phosphate + CoA. It carries out the reaction 1-(6Z,9Z,12Z-octadecatrienoyl)-sn-glycero-3-phosphate + (9Z)-octadecenoyl-CoA = (6Z,9Z,12Z)-octadecatrienoyl-2-(9Z)-octadecenoyl-sn-glycero-3-phosphate + CoA. The enzyme catalyses 1-(9Z,12Z,15Z)-octadecatrienoyl-sn-glycero-3-phosphate + (9Z)-octadecenoyl-CoA = 1-(9Z,12Z,15Z)-octadecatrienoyl-2-(9Z)-octadecenoyl-sn-glycero-3-phosphate + CoA. It catalyses the reaction 1-(9Z-octadecenoyl)-sn-glycero-3-phosphate + tetradecanoyl-CoA = 1-(9Z)-octadecenoyl-2-tetradecanoyl-sn-glycero-3-phosphate + CoA. The catalysed reaction is 1-(9Z-octadecenoyl)-sn-glycero-3-phosphate + hexadecanoyl-CoA = 1-(9Z)-octadecenoyl-2-hexadecanoyl-sn-glycero-3-phosphate + CoA. It carries out the reaction 1-(9Z-octadecenoyl)-sn-glycero-3-phosphate + octadecanoyl-CoA = 1-(9Z-octadecenoyl)-2-octadecanoyl-sn-glycero-3-phosphate + CoA. The enzyme catalyses 1-(9Z-octadecenoyl)-sn-glycero-3-phosphate + (9Z,12Z)-octadecadienoyl-CoA = 1-(9Z)-octadecenoyl-2-(9Z,12Z)-octadecadienoyl-sn-glycero-3-phosphate + CoA. It catalyses the reaction 1-(5Z,8Z,11Z,14Z-eicosatetraenoyl)-sn-glycero-3-phosphate + (9Z)-octadecenoyl-CoA = 1-(5Z,8Z,11Z,14Z)-eicosatetraenoyl-2-(9Z)-octadecenoyl-sn-glycero-3-phosphate + CoA. Its pathway is glycerolipid metabolism; triacylglycerol biosynthesis. The protein operates within phospholipid metabolism; CDP-diacylglycerol biosynthesis; CDP-diacylglycerol from sn-glycerol 3-phosphate: step 1/3. Functionally, converts glycerol-3-phosphate to 1-acyl-sn-glycerol-3-phosphate (lysophosphatidic acid or LPA) by incorporating an acyl moiety at the sn-1 position of the glycerol backbone. Also converts LPA into 1,2-diacyl-sn-glycerol-3-phosphate (phosphatidic acid or PA) by incorporating an acyl moiety at the sn-2 position of the glycerol backbone. Protects cells against lipotoxicity. The polypeptide is Glycerol-3-phosphate acyltransferase 3 (Danio rerio (Zebrafish)).